Here is a 430-residue protein sequence, read N- to C-terminus: 3-phosphoshikimate 1-carboxyvinyltransferase (430 aa).

3-phosphoshikimate-binding residues include Lys21, Ser22, and Arg26. Residue Lys21 coordinates phosphoenolpyruvate. Phosphoenolpyruvate contacts are provided by Gly94 and Arg122. The 3-phosphoshikimate site is built by Ser167, Gln169, Asp317, and Lys344. Gln169 contacts phosphoenolpyruvate. Asp317 serves as the catalytic Proton acceptor. Phosphoenolpyruvate is bound by residues Arg348 and Arg390.

It belongs to the EPSP synthase family. In terms of assembly, monomer.

Its subcellular location is the cytoplasm. The enzyme catalyses 3-phosphoshikimate + phosphoenolpyruvate = 5-O-(1-carboxyvinyl)-3-phosphoshikimate + phosphate. Its pathway is metabolic intermediate biosynthesis; chorismate biosynthesis; chorismate from D-erythrose 4-phosphate and phosphoenolpyruvate: step 6/7. Catalyzes the transfer of the enolpyruvyl moiety of phosphoenolpyruvate (PEP) to the 5-hydroxyl of shikimate-3-phosphate (S3P) to produce enolpyruvyl shikimate-3-phosphate and inorganic phosphate. The chain is 3-phosphoshikimate 1-carboxyvinyltransferase from Thermodesulfovibrio yellowstonii (strain ATCC 51303 / DSM 11347 / YP87).